We begin with the raw amino-acid sequence, 338 residues long: Holliday junction branch migration complex subunit RuvB (338 aa).

The tract at residues 1 to 180 is large ATPase domain (RuvB-L); sequence MERLLDNKFS…FGIIERLDYY (180 aa). The ATP site is built by leucine 19, arginine 20, glycine 61, lysine 64, threonine 65, threonine 66, arginine 170, tyrosine 180, and arginine 217. Threonine 65 contributes to the Mg(2+) binding site. The tract at residues 181–251 is small ATPAse domain (RuvB-S); the sequence is TVEELSQIVM…VAKSGLEMFE (71 aa). The head domain (RuvB-H) stretch occupies residues 254 to 338; that stretch reads EYGLDLVDRN…FKLKESGDNR (85 aa). DNA-binding residues include lysine 309 and arginine 314.

Belongs to the RuvB family. Homohexamer. Forms an RuvA(8)-RuvB(12)-Holliday junction (HJ) complex. HJ DNA is sandwiched between 2 RuvA tetramers; dsDNA enters through RuvA and exits via RuvB. An RuvB hexamer assembles on each DNA strand where it exits the tetramer. Each RuvB hexamer is contacted by two RuvA subunits (via domain III) on 2 adjacent RuvB subunits; this complex drives branch migration. In the full resolvosome a probable DNA-RuvA(4)-RuvB(12)-RuvC(2) complex forms which resolves the HJ.

The protein resides in the cytoplasm. It catalyses the reaction ATP + H2O = ADP + phosphate + H(+). Its function is as follows. The RuvA-RuvB-RuvC complex processes Holliday junction (HJ) DNA during genetic recombination and DNA repair, while the RuvA-RuvB complex plays an important role in the rescue of blocked DNA replication forks via replication fork reversal (RFR). RuvA specifically binds to HJ cruciform DNA, conferring on it an open structure. The RuvB hexamer acts as an ATP-dependent pump, pulling dsDNA into and through the RuvAB complex. RuvB forms 2 homohexamers on either side of HJ DNA bound by 1 or 2 RuvA tetramers; 4 subunits per hexamer contact DNA at a time. Coordinated motions by a converter formed by DNA-disengaged RuvB subunits stimulates ATP hydrolysis and nucleotide exchange. Immobilization of the converter enables RuvB to convert the ATP-contained energy into a lever motion, pulling 2 nucleotides of DNA out of the RuvA tetramer per ATP hydrolyzed, thus driving DNA branch migration. The RuvB motors rotate together with the DNA substrate, which together with the progressing nucleotide cycle form the mechanistic basis for DNA recombination by continuous HJ branch migration. Branch migration allows RuvC to scan DNA until it finds its consensus sequence, where it cleaves and resolves cruciform DNA. In Caldicellulosiruptor bescii (strain ATCC BAA-1888 / DSM 6725 / KCTC 15123 / Z-1320) (Anaerocellum thermophilum), this protein is Holliday junction branch migration complex subunit RuvB.